Consider the following 917-residue polypeptide: von Willebrand factor A domain-containing protein DDB_G0285975 (917 aa).

The interval 12–51 (DTTTTTTPTTPTTPTTPTTTPTTTTTPTTTPTTTTTSTTP) is disordered. Residues 13-51 (TTTTTTPTTPTTPTTPTTTPTTTTTPTTTPTTTTTSTTP) show a composition bias toward low complexity. A VIT domain is found at 87–215 (RYNTGLKNIS…NVTIHLTIIS (129 aa)). The 169-residue stretch at 339-507 (EFIFLIDCSG…NFEEQVMKLV (169 aa)) folds into the VWFA domain. Residues 679 to 741 (LFSSENRNQT…INSIPQKSNI (63 aa)) form the t-SNARE coiled-coil homology domain. Low complexity-rich tracts occupy residues 751 to 760 (SPSEVSTSKS) and 774 to 818 (NNNN…NNNN). Residues 751 to 822 (SPSEVSTSKS…NNNNNNSDNS (72 aa)) are disordered.

This Dictyostelium discoideum (Social amoeba) protein is von Willebrand factor A domain-containing protein DDB_G0285975.